We begin with the raw amino-acid sequence, 343 residues long: ELAV-like protein 3 (343 aa).

RRM domains follow at residues 35 to 113 (TNLI…YARP), 121 to 202 (ANLY…FANN), and 260 to 338 (WCIF…FKTS).

Belongs to the RRM elav family.

Its function is as follows. RNA-binding protein that binds to AU-rich sequences (AREs) of target mRNAs. May also bind poly-A tracts via RRM 3. May be involved in neuronal differentiation and maintenance. This is ELAV-like protein 3 from Xenopus tropicalis (Western clawed frog).